The sequence spans 888 residues: MNPTLVVELSGDKTLEPHRLGGKAHSLNHLIHAGLPVPPAFCITAQAYRQFIEFAVPGALLDTGAPGNVRDMILSAAIPAPLDLAIRHACKQLGDGASLAVRSSALEEDGLTHSFAGQYDTYLHVRGDDEVVRKVQSCWASLWAERAAQYSRTSAAQSDIAVVLQIMVDADAAGVMFTQDPLTGDANHIVIDSCWGLGEGVVSGQVTTDSFILDKASGEIRERQIRHKPHYCQRDPQGRVTLLQTPEARRDAPSLTPEQLQQLARLARQTRMIYGAELDIEWAVKDDRVWLLQARPITTQAKPVQMLYANPWESDPTIKERAFFSRMDTGEIVTGLMTPLGLSFCQFYQKHIHGPAIKTMGLADIGDWQIYMGYLQGYVYLNISGSAYMLRQCPPTRDEMKFTTRYATADIDFSGYKNPYGPGVQGWAYLKSAWHWLKQQRHNLRSAGATVDAMIALRQRETRRFLALDLTTMTHQELERELSRIDGYFLDSCAAYMPFFLQSFALYDALALTCERYLKGRGNGLQNRIKASMNNLRTIEVTLGILSLVETVNRQPALKALFERHSAQELVTVLPTDPESRAFWQSDFSAFLFEFGARGRQEFELSLPRWNDDPSYLLQVMKMYLQHPVDLHTKLRETERLRHEDSAALLKAMPWFGRMKLKFITKLYGVMAERREATRPTFVTETWFYRRIMLEVLRRLEAQGLVKSADLPYVDFERFRAFMAGEQSAQEAFAADLIERNRHQHLLNLHAEEPPMAIVGGYQPRMKAPTAENAAGMLSGLAASPGKVVAKARVITDLLAQAGELQPNEILVARFTDASWTPLFALAAGIVTDIGSALSHSCIVAREFGIPAAVNLKNATQLINSGDTLILDGDSGTVIIQRGERADG.

This sequence belongs to the PigC family.

It participates in antibiotic biosynthesis; prodigiosin biosynthesis. Its function is as follows. Involved in the biosynthesis of 2-methyl-3-n-amyl-pyrrole (MAP), one of the terminal products involved in the biosynthesis of the red antibiotic prodigiosin (Pig). Catalyzes the transfer of 2-methyl-3-n-amyl-pyrrole (MAP) to 4-methoxy-2,2'-bipyrrole-5-carbaldehyde (MBC) to yield prodigiosin. It is able to use substrates with a variety of monocyclic rings in place of the pyrrolic ring A of its natural substrate. The chain is Prodigiosin synthesizing transferase PigC from Serratia marcescens.